The following is a 1044-amino-acid chain: Integrin alpha-8 (1044 aa).

Positions 1 to 23 (MPRRQPPRPLLLLSALLCAPASA) are cleaved as a signal peptide. Topologically, residues 24–991 (FNLDEEKLTV…WSTPNVSFVI (968 aa)) are extracellular. 7 FG-GAP repeats span residues 28 to 90 (EEKL…RCRQ), 104 to 165 (NGTR…AYAE), 170 to 222 (RNSN…ITNY), 236 to 288 (QTGV…SSDL), 289 to 354 (TFIQ…FLFR), 355 to 413 (DPQI…GLKT), and 417 to 480 (QVLN…LNPM). Residue Asn66 is glycosylated (N-linked (GlcNAc...) asparagine). An intrachain disulfide couples Cys81 to Cys88. N-linked (GlcNAc...) asparagine glycosylation occurs at Asn104. Residues Cys132 and Cys153 are joined by a disulfide bond. Residue Asn159 is glycosylated (N-linked (GlcNAc...) asparagine). A disulfide bond links Cys169 and Cys182. N-linked (GlcNAc...) asparagine glycosylation occurs at Asn221. 4 residues coordinate Ca(2+): Glu257, Thr259, Asp261, and Glu265. 2 N-linked (GlcNAc...) asparagine glycosylation sites follow: Asn284 and Asn293. The Ca(2+) site is built by Asp311, Asn313, Asp315, Leu317, Asp319, Asp377, Asn379, Asp381, Tyr383, and Asp385. Positions 437–439 (RGD) match the Cell attachment site motif. Ca(2+) is bound by residues Asp441, Asp443, Asn445, Tyr447, and Asp449. Asn486 is a glycosylation site (N-linked (GlcNAc...) asparagine). 2 disulfides stabilise this stretch: Cys489–Cys500 and Cys506–Cys562. Asn587 is a glycosylation site (N-linked (GlcNAc...) asparagine). 2 disulfides stabilise this stretch: Cys623-Cys629 and Cys695-Cys708. Asn701, Asn719, Asn751, Asn762, Asn818, Asn877, and Asn904 each carry an N-linked (GlcNAc...) asparagine glycan. 2 disulfides stabilise this stretch: Cys849-Cys905 and Cys910-Cys915. Asn952 and Asn986 each carry an N-linked (GlcNAc...) asparagine glycan. A helical transmembrane segment spans residues 992–1015 (PLWVIILAIMLGLLVLAVLTLALW). At 1016 to 1044 (KCGFFDRARPPQDDMADREQLTNNKTTDA) the chain is on the cytoplasmic side.

It belongs to the integrin alpha chain family. As to quaternary structure, heterodimer of an alpha and a beta subunit. The alpha subunit is composed of a heavy and a light chain linked by a disulfide bond. Alpha-8 associates with beta-1. Prominently expressed on axons and on cells in contact with basal laminae in embryos.

The protein localises to the membrane. It localises to the cell membrane. Its function is as follows. Integrin alpha-8/beta-1 functions in the genesis of kidney and probably of other organs by regulating the recruitment of mesenchymal cells into epithelial structures. It recognizes the sequence R-G-D in a wide array of ligands including TNC, FN1, SPP1, TGFB1, TGFB3 and VTN. NPNT is probably its functional ligand in kidney genesis. Neuronal receptor for TNC it mediates cell-cell interactions and regulates neurite outgrowth of sensory and motor neurons. The polypeptide is Integrin alpha-8 (ITGA8) (Gallus gallus (Chicken)).